A 255-amino-acid polypeptide reads, in one-letter code: Protein DOG1-like 2 (255 aa).

A DOG1 domain is found at 10–246 (EKLQKRCYHE…HDRGRVRADV (237 aa)).

The polypeptide is Protein DOG1-like 2 (Arabidopsis thaliana (Mouse-ear cress)).